The following is a 370-amino-acid chain: DNA replication and repair protein RecF (370 aa).

Residue G30–T37 participates in ATP binding.

The protein belongs to the RecF family.

Its subcellular location is the cytoplasm. Its function is as follows. The RecF protein is involved in DNA metabolism; it is required for DNA replication and normal SOS inducibility. RecF binds preferentially to single-stranded, linear DNA. It also seems to bind ATP. In Bacillus pumilus (strain SAFR-032), this protein is DNA replication and repair protein RecF.